Here is a 90-residue protein sequence, read N- to C-terminus: Small ribosomal subunit protein bS20 (90 aa).

The interval 1-25 (MANSPSAKKRAKQAEKRRSHNASLR) is disordered. The segment covering 7 to 20 (AKKRAKQAEKRRSH) has biased composition (basic residues).

Belongs to the bacterial ribosomal protein bS20 family.

Its function is as follows. Binds directly to 16S ribosomal RNA. The polypeptide is Small ribosomal subunit protein bS20 (Pseudomonas fluorescens (strain Pf0-1)).